A 346-amino-acid chain; its full sequence is L-glyceraldehyde 3-phosphate reductase (346 aa).

NADP(+) is bound by residues Trp33, Asp61, Tyr66, Ser168, Gln193, Thr223, Leu225, Gln227, Lys233, Ser303, Gln307, and Asn311.

Belongs to the shaker potassium channel beta subunit family.

It carries out the reaction a primary alcohol + NADP(+) = an aldehyde + NADPH + H(+). Aldo-keto reductase that catalyzes the stereospecific, NADPH-dependent reduction of L-glyceraldehyde 3-phosphate (L-GAP) to L-glycerol 3-phosphate (L-G3P). The sequence is that of L-glyceraldehyde 3-phosphate reductase from Escherichia coli O157:H7.